Here is a 441-residue protein sequence, read N- to C-terminus: FBD-associated F-box protein At5g18780 (441 aa).

The 47-residue stretch at 10–56 (EDRISILPEPLLCHILSFLRTKDSVRTSVLSSRWRDLWLWVPRLDLD) folds into the F-box domain. The FBD domain occupies 366 to 410 (LPRCLISSLASVDIESPITDKATELKLVSYLLENSTTLKKLVLRL).

The sequence is that of FBD-associated F-box protein At5g18780 from Arabidopsis thaliana (Mouse-ear cress).